Consider the following 196-residue polypeptide: Serine recombinase PinQ (196 aa).

In terms of domain architecture, Resolvase/invertase-type recombinase catalytic spans 3 to 143 (QIFAYCRIST…SGIVRARGAG (141 aa)). Serine 11 acts as the O-(5'-phospho-DNA)-serine intermediate in catalysis.

This sequence belongs to the site-specific recombinase resolvase family.

The sequence is that of Serine recombinase PinQ (pinQ) from Escherichia coli (strain K12).